A 399-amino-acid polypeptide reads, in one-letter code: Enoyl-[acyl-carrier-protein] reductase [NADH] (399 aa).

NAD(+) is bound by residues 48–53, 74–75, 111–112, and 139–140; these read GASTGY, FE, DA, and LA. Tyrosine 225 lines the substrate pocket. The active-site Proton donor is tyrosine 235. NAD(+) is bound by residues lysine 244 and 274–276; that span reads VVT.

This sequence belongs to the TER reductase family. As to quaternary structure, monomer.

The enzyme catalyses a 2,3-saturated acyl-[ACP] + NAD(+) = a (2E)-enoyl-[ACP] + NADH + H(+). It functions in the pathway lipid metabolism; fatty acid biosynthesis. Functionally, involved in the final reduction of the elongation cycle of fatty acid synthesis (FAS II). Catalyzes the reduction of a carbon-carbon double bond in an enoyl moiety that is covalently linked to an acyl carrier protein (ACP). The sequence is that of Enoyl-[acyl-carrier-protein] reductase [NADH] from Yersinia pestis bv. Antiqua (strain Antiqua).